Consider the following 251-residue polypeptide: Protein TK1472 (251 aa).

This sequence belongs to the CinA family.

In Thermococcus kodakarensis (strain ATCC BAA-918 / JCM 12380 / KOD1) (Pyrococcus kodakaraensis (strain KOD1)), this protein is Protein TK1472.